The chain runs to 110 residues: UPF0122 protein SP70585_1353 (110 aa).

The protein belongs to the UPF0122 family.

Its function is as follows. Might take part in the signal recognition particle (SRP) pathway. This is inferred from the conservation of its genetic proximity to ftsY/ffh. May be a regulatory protein. This is UPF0122 protein SP70585_1353 from Streptococcus pneumoniae (strain 70585).